Consider the following 271-residue polypeptide: Regulatory protein RecX (271 aa).

This sequence belongs to the RecX family.

It is found in the cytoplasm. Functionally, modulates RecA activity. This Lactobacillus delbrueckii subsp. bulgaricus (strain ATCC 11842 / DSM 20081 / BCRC 10696 / JCM 1002 / NBRC 13953 / NCIMB 11778 / NCTC 12712 / WDCM 00102 / Lb 14) protein is Regulatory protein RecX.